A 487-amino-acid chain; its full sequence is ATP synthase subunit beta, plastid (487 aa).

169-176 (GGAGVGKT) contacts ATP.

It belongs to the ATPase alpha/beta chains family. F-type ATPases have 2 components, CF(1) - the catalytic core - and CF(0) - the membrane proton channel. CF(1) has five subunits: alpha(3), beta(3), gamma(1), delta(1), epsilon(1). CF(0) has four main subunits: a(1), b(1), b'(1) and c(9-12).

It is found in the plastid membrane. It catalyses the reaction ATP + H2O + 4 H(+)(in) = ADP + phosphate + 5 H(+)(out). Its function is as follows. Produces ATP from ADP in the presence of a proton gradient across the membrane. The catalytic sites are hosted primarily by the beta subunits. This Cuscuta pentagona (Five-angled dodder) protein is ATP synthase subunit beta, plastid (atpB).